Here is a 275-residue protein sequence, read N- to C-terminus: tRNA pseudouridine synthase A (275 aa).

Aspartate 72 (nucleophile) is an active-site residue. Residue tyrosine 133 coordinates substrate.

Belongs to the tRNA pseudouridine synthase TruA family. In terms of assembly, homodimer.

The catalysed reaction is uridine(38/39/40) in tRNA = pseudouridine(38/39/40) in tRNA. In terms of biological role, formation of pseudouridine at positions 38, 39 and 40 in the anticodon stem and loop of transfer RNAs. In Gluconobacter oxydans (strain 621H) (Gluconobacter suboxydans), this protein is tRNA pseudouridine synthase A.